A 556-amino-acid chain; its full sequence is 2-succinyl-5-enolpyruvyl-6-hydroxy-3-cyclohexene-1-carboxylate synthase (556 aa).

The protein belongs to the TPP enzyme family. MenD subfamily. As to quaternary structure, homodimer. Requires Mg(2+) as cofactor. Mn(2+) serves as cofactor. The cofactor is thiamine diphosphate.

It catalyses the reaction isochorismate + 2-oxoglutarate + H(+) = 5-enolpyruvoyl-6-hydroxy-2-succinyl-cyclohex-3-ene-1-carboxylate + CO2. Its pathway is quinol/quinone metabolism; 1,4-dihydroxy-2-naphthoate biosynthesis; 1,4-dihydroxy-2-naphthoate from chorismate: step 2/7. It functions in the pathway quinol/quinone metabolism; menaquinone biosynthesis. Its function is as follows. Catalyzes the thiamine diphosphate-dependent decarboxylation of 2-oxoglutarate and the subsequent addition of the resulting succinic semialdehyde-thiamine pyrophosphate anion to isochorismate to yield 2-succinyl-5-enolpyruvyl-6-hydroxy-3-cyclohexene-1-carboxylate (SEPHCHC). In Escherichia coli O157:H7, this protein is 2-succinyl-5-enolpyruvyl-6-hydroxy-3-cyclohexene-1-carboxylate synthase.